The sequence spans 629 residues: tRNA uridine 5-carboxymethylaminomethyl modification enzyme MnmG (629 aa).

Residues 13–18, Val-125, and Ser-180 each bind FAD; that span reads GGGHAG. 273 to 287 lines the NAD(+) pocket; the sequence is GPRYCPSIEDKVMRF. Gln-370 serves as a coordination point for FAD.

Belongs to the MnmG family. Homodimer. Heterotetramer of two MnmE and two MnmG subunits. Requires FAD as cofactor.

It is found in the cytoplasm. NAD-binding protein involved in the addition of a carboxymethylaminomethyl (cmnm) group at the wobble position (U34) of certain tRNAs, forming tRNA-cmnm(5)s(2)U34. The polypeptide is tRNA uridine 5-carboxymethylaminomethyl modification enzyme MnmG (Salmonella paratyphi A (strain ATCC 9150 / SARB42)).